The following is a 344-amino-acid chain: RNA 3'-terminal phosphate cyclase (344 aa).

Residues Gln-103 and 283–287 contribute to the ATP site; that span reads HLADQ. The active-site Tele-AMP-histidine intermediate is the His-308.

Belongs to the RNA 3'-terminal cyclase family. Type 1 subfamily.

The protein localises to the cytoplasm. The catalysed reaction is a 3'-end 3'-phospho-ribonucleotide-RNA + ATP = a 3'-end 2',3'-cyclophospho-ribonucleotide-RNA + AMP + diphosphate. In terms of biological role, catalyzes the conversion of 3'-phosphate to a 2',3'-cyclic phosphodiester at the end of RNA. The mechanism of action of the enzyme occurs in 3 steps: (A) adenylation of the enzyme by ATP; (B) transfer of adenylate to an RNA-N3'P to produce RNA-N3'PP5'A; (C) and attack of the adjacent 2'-hydroxyl on the 3'-phosphorus in the diester linkage to produce the cyclic end product. The biological role of this enzyme is unknown but it is likely to function in some aspects of cellular RNA processing. In Salmonella agona (strain SL483), this protein is RNA 3'-terminal phosphate cyclase.